A 444-amino-acid polypeptide reads, in one-letter code: Glucarate dehydratase (444 aa).

4 residues coordinate substrate: H30, T101, Y148, and K203. K205 (proton acceptor) is an active-site residue. Mg(2+)-binding residues include D233, E264, and N287. A substrate-binding site is contributed by 233–235 (DPN). Residues N287, 337–339 (HSN), H366, and R420 each bind substrate. H337 (proton acceptor) is an active-site residue.

Belongs to the mandelate racemase/muconate lactonizing enzyme family. GlucD subfamily. It depends on Mg(2+) as a cofactor.

The enzyme catalyses D-glucarate = 5-dehydro-4-deoxy-D-glucarate + H2O. It participates in carbohydrate acid metabolism; D-glucarate degradation; 2,5-dioxopentanoate from D-glucarate: step 1/2. Catalyzes the dehydration of glucarate to 5-keto-4-deoxy-D-glucarate (5-kdGluc). The polypeptide is Glucarate dehydratase (gudD) (Acinetobacter baylyi (strain ATCC 33305 / BD413 / ADP1)).